Reading from the N-terminus, the 539-residue chain is CTP synthase (539 aa).

The segment at 1–267 (MTKYIFVTGG…DQKVVDFLHI (267 aa)) is amidoligase domain. Serine 13 is a binding site for CTP. Residue serine 13 coordinates UTP. 14 to 19 (SLGKGI) is a binding site for ATP. Position 54 (tyrosine 54) interacts with L-glutamine. ATP is bound at residue aspartate 71. Mg(2+) contacts are provided by aspartate 71 and glutamate 141. CTP-binding positions include 148–150 (DME), 188–193 (KSKPTQ), and lysine 224. UTP is bound by residues 188-193 (KSKPTQ) and lysine 224. One can recognise a Glutamine amidotransferase type-1 domain in the interval 294–537 (KITLVGKYVE…IGAASGLQVD (244 aa)). Glycine 356 is a binding site for L-glutamine. Residue cysteine 383 is the Nucleophile; for glutamine hydrolysis of the active site. Residues 384 to 387 (LGMQ), glutamate 407, and arginine 465 contribute to the L-glutamine site. Catalysis depends on residues histidine 510 and glutamate 512.

Belongs to the CTP synthase family. As to quaternary structure, homotetramer.

It carries out the reaction UTP + L-glutamine + ATP + H2O = CTP + L-glutamate + ADP + phosphate + 2 H(+). The catalysed reaction is L-glutamine + H2O = L-glutamate + NH4(+). The enzyme catalyses UTP + NH4(+) + ATP = CTP + ADP + phosphate + 2 H(+). The protein operates within pyrimidine metabolism; CTP biosynthesis via de novo pathway; CTP from UDP: step 2/2. With respect to regulation, allosterically activated by GTP, when glutamine is the substrate; GTP has no effect on the reaction when ammonia is the substrate. The allosteric effector GTP functions by stabilizing the protein conformation that binds the tetrahedral intermediate(s) formed during glutamine hydrolysis. Inhibited by the product CTP, via allosteric rather than competitive inhibition. Its function is as follows. Catalyzes the ATP-dependent amination of UTP to CTP with either L-glutamine or ammonia as the source of nitrogen. Regulates intracellular CTP levels through interactions with the four ribonucleotide triphosphates. The sequence is that of CTP synthase from Lactobacillus delbrueckii subsp. bulgaricus (strain ATCC 11842 / DSM 20081 / BCRC 10696 / JCM 1002 / NBRC 13953 / NCIMB 11778 / NCTC 12712 / WDCM 00102 / Lb 14).